We begin with the raw amino-acid sequence, 85 residues long: Large ribosomal subunit protein bL27 (85 aa).

Positions 1-21 are disordered; that stretch reads MAHKKGVGSSKNGRESESKRL.

Belongs to the bacterial ribosomal protein bL27 family.

The protein is Large ribosomal subunit protein bL27 of Porphyromonas gingivalis (strain ATCC 33277 / DSM 20709 / CIP 103683 / JCM 12257 / NCTC 11834 / 2561).